Reading from the N-terminus, the 268-residue chain is Phosphatidylglycerol--prolipoprotein diacylglyceryl transferase (268 aa).

The next 7 membrane-spanning stretches (helical) occupy residues 27–47 (PALRWYGFTYLVGFVAAMWLL), 66–86 (LLFYGFLGVILGGRIGYVLFY), 104–124 (GGMSFHGGLIGVITAMIYITW), 130–150 (FFAVADMVAPVVPIGLGAGRI), 181–201 (PSQLYQFALEGVALFLLLYWF), 208–228 (VGAVSGMFLLGYGIFRVIVET), and 242–262 (LMTMGQILSVPMILFGLYLIL). Position 149 (Arg149) interacts with a 1,2-diacyl-sn-glycero-3-phospho-(1'-sn-glycerol).

The protein belongs to the Lgt family.

The protein resides in the cell inner membrane. The catalysed reaction is L-cysteinyl-[prolipoprotein] + a 1,2-diacyl-sn-glycero-3-phospho-(1'-sn-glycerol) = an S-1,2-diacyl-sn-glyceryl-L-cysteinyl-[prolipoprotein] + sn-glycerol 1-phosphate + H(+). It functions in the pathway protein modification; lipoprotein biosynthesis (diacylglyceryl transfer). In terms of biological role, catalyzes the transfer of the diacylglyceryl group from phosphatidylglycerol to the sulfhydryl group of the N-terminal cysteine of a prolipoprotein, the first step in the formation of mature lipoproteins. This Shewanella oneidensis (strain ATCC 700550 / JCM 31522 / CIP 106686 / LMG 19005 / NCIMB 14063 / MR-1) protein is Phosphatidylglycerol--prolipoprotein diacylglyceryl transferase.